The following is a 508-amino-acid chain: Photosystem II CP47 reaction center protein (508 aa).

6 helical membrane passes run 21-36 (AVHI…WAGS), 101-115 (IILS…IWHW), 140-156 (GIHL…FGAF), 203-218 (IAAG…FHLS), 237-252 (VLSS…AFVV), and 457-472 (NFAL…HGGR).

Belongs to the PsbB/PsbC family. PsbB subfamily. In terms of assembly, PSII is composed of 1 copy each of membrane proteins PsbA, PsbB, PsbC, PsbD, PsbE, PsbF, PsbH, PsbI, PsbJ, PsbK, PsbL, PsbM, PsbT, PsbX, PsbY, PsbZ, Psb30/Ycf12, at least 3 peripheral proteins of the oxygen-evolving complex and a large number of cofactors. It forms dimeric complexes. Binds multiple chlorophylls. PSII binds additional chlorophylls, carotenoids and specific lipids. is required as a cofactor.

It is found in the plastid. The protein resides in the chloroplast thylakoid membrane. Its function is as follows. One of the components of the core complex of photosystem II (PSII). It binds chlorophyll and helps catalyze the primary light-induced photochemical processes of PSII. PSII is a light-driven water:plastoquinone oxidoreductase, using light energy to abstract electrons from H(2)O, generating O(2) and a proton gradient subsequently used for ATP formation. The sequence is that of Photosystem II CP47 reaction center protein from Chaetosphaeridium globosum (Charophycean green alga).